Consider the following 193-residue polypeptide: Cysteine and glycine-rich protein 2 (193 aa).

The 52-residue stretch at 10–61 (CGACGRTVYHAEEVQCDGRSFHRCCFLCMVCRKNLDSTTVAIHDEEIYCKSC) folds into the LIM zinc-binding 1 domain. A Nuclear localization signal motif is present at residues 64–69 (KKYGPK). K91 is covalently cross-linked (Glycyl lysine isopeptide (Lys-Gly) (interchain with G-Cter in SUMO2)). N6-acetyllysine occurs at positions 112 and 131. Residues 119 to 170 (CSRCGDSVYAAEKIIGAGKPWHKNCFRCAKCGKSLESTTLTEKEGEIYCKGC) enclose the LIM zinc-binding 2 domain. Position 137 is an N6-acetyllysine; alternate (K137). Residue K137 is modified to N6-succinyllysine; alternate. K161 carries the post-translational modification N6-acetyllysine.

Interacts with KAT14. The LIM domain 1 is necessary and sufficient for this interaction. Interacts with GLRX3.

Its subcellular location is the nucleus. Drastically down-regulated in response to PDGF-BB or cell injury, that promote smooth muscle cell proliferation and dedifferentiation. Seems to play a role in the development of the embryonic vascular system. This is Cysteine and glycine-rich protein 2 (Csrp2) from Mus musculus (Mouse).